Here is a 278-residue protein sequence, read N- to C-terminus: HTH-type transcriptional activator RhaS (278 aa).

Residues 174–272 enclose the HTH araC/xylS-type domain; it reads NLLLAWLEDH…NWSPRDIRQG (99 aa). 2 consecutive DNA-binding regions (H-T-H motif) follow at residues 191 to 212 and 239 to 262; these read DAVA…KQQT and VTDI…RREF.

In terms of assembly, binds DNA as a dimer.

It localises to the cytoplasm. Functionally, activates expression of the rhaBAD and rhaT operons. In Shigella dysenteriae serotype 1 (strain Sd197), this protein is HTH-type transcriptional activator RhaS.